We begin with the raw amino-acid sequence, 784 residues long: Spindle pole body component alp4 (784 aa).

Belongs to the TUBGCP family. In terms of assembly, part of the gamma-tubulin complex. Interacts with mcp6. Interacts with mto1. Interacts with mto2.

The protein localises to the cytoplasm. It is found in the cytoskeleton. The protein resides in the microtubule organizing center. Its subcellular location is the spindle pole body. Its function is as follows. Component of the gamma tubule complex that is required for the regulation of both interphase microtubules and mitotic bipolar spindles. The polypeptide is Spindle pole body component alp4 (alp4) (Schizosaccharomyces pombe (strain 972 / ATCC 24843) (Fission yeast)).